A 62-amino-acid chain; its full sequence is UPF0337 protein gsr0040 (62 aa).

Basic and acidic residues-rich tracts occupy residues 1-15 (MGIDKRAEATAKDVQ) and 27-62 (DDPKLELEGKAKQVEASAEHKKEDLKDQAHRTIDNV). The tract at residues 1-62 (MGIDKRAEAT…DQAHRTIDNV (62 aa)) is disordered.

This sequence belongs to the UPF0337 (CsbD) family.

The chain is UPF0337 protein gsr0040 from Gloeobacter violaceus (strain ATCC 29082 / PCC 7421).